The following is a 585-amino-acid chain: Glutamate decarboxylase 2 (585 aa).

The tract at residues 1-25 is disordered; sequence MASPGSGFWSFGSEDGSGDPENPGT. Residues Ser3, Ser6, Ser10, Ser13, and Ser17 each carry the phosphoserine modification. S-palmitoyl cysteine attachment occurs at residues Cys30 and Cys45. 181 to 183 serves as a coordination point for substrate; sequence QLS. The residue at position 396 (Lys396) is an N6-(pyridoxal phosphate)lysine. A substrate-binding site is contributed by Arg558.

Belongs to the group II decarboxylase family. In terms of assembly, homodimer. Requires pyridoxal 5'-phosphate as cofactor. Post-translationally, the N-terminus is blocked. In terms of processing, phosphorylated; which does not affect kinetic parameters or subcellular location. Palmitoylated; which is required for presynaptic clustering.

Its subcellular location is the cytoplasm. It is found in the cytosol. The protein resides in the cytoplasmic vesicle. The protein localises to the presynaptic cell membrane. It localises to the golgi apparatus membrane. It catalyses the reaction L-glutamate + H(+) = 4-aminobutanoate + CO2. Its function is as follows. Catalyzes the production of GABA. The protein is Glutamate decarboxylase 2 (Gad2) of Rattus norvegicus (Rat).